The following is a 390-amino-acid chain: Formamidopyrimidine-DNA glycosylase (390 aa).

The active-site Schiff-base intermediate with DNA is proline 2. Glutamate 3 serves as the catalytic Proton donor. Catalysis depends on lysine 60, which acts as the Proton donor; for beta-elimination activity. Tyrosine 107, arginine 126, lysine 167, and asparagine 186 together coordinate DNA. Residues 283 to 390 (AEKAAKVRPA…AGKKPKGRKS (108 aa)) are disordered. Residues 301-316 (DDGDGEEDEQETEKED) are compositionally biased toward acidic residues. Basic residues predominate over residues 321–337 (SKKGQKPRGGRGKKPAS). Over residues 343-355 (ESDDDGDDSEAEE) the composition is skewed to acidic residues. Basic residues predominate over residues 360–370 (PKGRGTKPAIK).

It belongs to the FPG family. In terms of assembly, monomer. In terms of tissue distribution, expressed in leaves (at protein levels).

The protein localises to the nucleus. It catalyses the reaction Hydrolysis of DNA containing ring-opened 7-methylguanine residues, releasing 2,6-diamino-4-hydroxy-5-(N-methyl)formamidopyrimidine.. It carries out the reaction 2'-deoxyribonucleotide-(2'-deoxyribose 5'-phosphate)-2'-deoxyribonucleotide-DNA = a 3'-end 2'-deoxyribonucleotide-(2,3-dehydro-2,3-deoxyribose 5'-phosphate)-DNA + a 5'-end 5'-phospho-2'-deoxyribonucleoside-DNA + H(+). Involved in base excision repair of DNA damaged by oxidation or by mutagenic agents. Acts as a DNA glycosylase that recognizes and removes damaged bases. Can process efficiently 4,6-diamino-5-formamidopyrimidine (FapyA), 2,6-diamino-4- hydroxy-5-formamidopyrimidine (FapyG) and the further oxidation products of 8-oxoguanine (8-oxoG), such as guanidinohydantoin and spiroiminodihydantoin. Has marginal activity towards 8-oxoG. Has AP (apurinic/apyrimidinic) lyase activity. Cleaves the DNA backbone by beta-delta elimination to generate a single-strand break at the site of the removed base with both 3'- and 5'-phosphates. This Arabidopsis thaliana (Mouse-ear cress) protein is Formamidopyrimidine-DNA glycosylase (FPG1).